The following is a 412-amino-acid chain: Alanyl-tRNA editing protein Aarsd1 (412 aa).

Zn(2+) contacts are provided by histidine 109 and histidine 113. Serine 174 carries the phosphoserine modification. Zn(2+)-binding residues include cysteine 209 and histidine 213.

The protein belongs to the class-II aminoacyl-tRNA synthetase family. Alax-L subfamily. Zn(2+) is required as a cofactor.

The protein resides in the cytoplasm. Functions in trans to edit the amino acid moiety from incorrectly charged Ser-tRNA(Ala). This is Alanyl-tRNA editing protein Aarsd1 (Aarsd1) from Mus musculus (Mouse).